We begin with the raw amino-acid sequence, 352 residues long: Ribosomal RNA large subunit methyltransferase M (352 aa).

S-adenosyl-L-methionine-binding positions include serine 187, 218–221 (APGG), aspartate 237, aspartate 257, and aspartate 273. Lysine 302 acts as the Proton acceptor in catalysis.

This sequence belongs to the class I-like SAM-binding methyltransferase superfamily. RNA methyltransferase RlmE family. RlmM subfamily. As to quaternary structure, monomer.

It localises to the cytoplasm. The enzyme catalyses cytidine(2498) in 23S rRNA + S-adenosyl-L-methionine = 2'-O-methylcytidine(2498) in 23S rRNA + S-adenosyl-L-homocysteine + H(+). Catalyzes the 2'-O-methylation at nucleotide C2498 in 23S rRNA. This is Ribosomal RNA large subunit methyltransferase M from Methylococcus capsulatus (strain ATCC 33009 / NCIMB 11132 / Bath).